The following is a 238-amino-acid chain: Ribosomal RNA small subunit methyltransferase G (238 aa).

S-adenosyl-L-methionine contacts are provided by residues Gly80, 131 to 132 (AE), and Arg148.

Belongs to the methyltransferase superfamily. RNA methyltransferase RsmG family.

It is found in the cytoplasm. Specifically methylates the N7 position of a guanine in 16S rRNA. The polypeptide is Ribosomal RNA small subunit methyltransferase G (Thermotoga maritima (strain ATCC 43589 / DSM 3109 / JCM 10099 / NBRC 100826 / MSB8)).